Reading from the N-terminus, the 446-residue chain is UDP-N-acetylglucosamine--dolichyl-phosphate N-acetylglucosaminephosphotransferase (446 aa).

Transmembrane regions (helical) follow at residues 1 to 21 (MIES…LMNQ) and 25 to 45 (PLLS…MFIP). Residues 59 to 61 (KDM) and glutamate 71 each bind UDP-N-acetyl-alpha-D-glucosamine. Transmembrane regions (helical) follow at residues 73–93 (MGAV…PVLF) and 123–143 (LLGA…LGIL). Lysine 154 serves as a coordination point for dolichyl phosphate. 2 helical membrane-spanning segments follow: residues 155 to 175 (FFLP…DYGV) and 191 to 211 (SLIN…IFCP). A dolichyl phosphate-binding site is contributed by 208–216 (IFCPNSINI). A Mg(2+)-binding site is contributed by asparagine 215. Helical transmembrane passes span 216-236 (IIAG…LVIA), 254-274 (AHLL…GLLK), 282-302 (VFVG…VGIL), and 311-331 (LFFI…FGLV). Residue asparagine 221 participates in UDP-N-acetyl-alpha-D-glucosamine binding. Aspartate 286 is a Mg(2+) binding site. 335-337 (RHR) lines the UDP-N-acetyl-alpha-D-glucosamine pocket. An N-linked (GlcNAc...) asparagine glycan is attached at asparagine 395. The chain crosses the membrane as a helical span at residues 412–432 (DHLTICIMGLQLLTGIFGLII).

It belongs to the glycosyltransferase 4 family. Requires Mg(2+) as cofactor.

The protein resides in the endoplasmic reticulum membrane. The enzyme catalyses a di-trans,poly-cis-dolichyl phosphate + UDP-N-acetyl-alpha-D-glucosamine = an N-acetyl-alpha-D-glucosaminyl-diphospho-di-trans,poly-cis-dolichol + UMP. It functions in the pathway protein modification; protein glycosylation. With respect to regulation, inhibited by natural nucleoside antibiotic tunicamycin, which acts as a structural analog and competitor of UDP-GlcNAc. UDP-N-acetylglucosamine--dolichyl-phosphate N-acetylglucosaminephosphotransferase that operates in the biosynthetic pathway of dolichol-linked oligosaccharides, the glycan precursors employed in protein asparagine (N)-glycosylation. The assembly of dolichol-linked oligosaccharides begins on the cytosolic side of the endoplasmic reticulum membrane and finishes in its lumen. The sequential addition of sugars to dolichol pyrophosphate produces dolichol-linked oligosaccharides containing fourteen sugars, including two GlcNAcs, nine mannoses and three glucoses. Once assembled, the oligosaccharide is transferred from the lipid to nascent proteins by oligosaccharyltransferases. Catalyzes the initial step of dolichol-linked oligosaccharide biosynthesis, transfering GlcNAc-1-P from cytosolic UDP-GlcNAc onto the carrier lipid dolichyl phosphate (P-dolichol), yielding GlcNAc-P-P-dolichol embedded in the cytoplasmic leaflet of the endoplasmic reticulum membrane. The protein is UDP-N-acetylglucosamine--dolichyl-phosphate N-acetylglucosaminephosphotransferase (gpt2) of Schizosaccharomyces pombe (strain 972 / ATCC 24843) (Fission yeast).